Consider the following 328-residue polypeptide: MENHSKQTEAPHPGTYMPAGYPPPYPPAAFQGPSDHAAYPIPQAGYQGPPGPYPGPQPGYPVPPGGYAGGGPSGFPVQNQPAYNHPGGPGGTPWMPAPPPPLNCPPGLEYLAQIDQLLVHQQIELLEVLTGFETNNKYEIKNSLGQRVYFAVEDTDCCTRNCCGASRPFTLRILDNLGREVMTLERPLRCSSCCFPCCLQEIEIQAPPGVPVGYVTQTWHPCLPKFTLQNEKKQDVLKVVGPCVVCSCCSDIDFELKSLDEESVVGKISKQWSGFVREAFTDADNFGIQFPLDLDVKMKAVMLGACFLIDFMFFERTGNEEQRSGAWQ.

Residues 1-93 (MENHSKQTEA…NHPGGPGGTP (93 aa)) form a proline-rich domain (PRD) region. The segment at 1-96 (MENHSKQTEA…GGPGGTPWMP (96 aa)) is disordered. At 1–297 (MENHSKQTEA…IQFPLDLDVK (297 aa)) the chain is on the cytoplasmic side. The SH3-binding 1 signature appears at 18 to 26 (PAGYPPPYP). The short motif at 22–25 (PPPY) is the PPxY motif element. The segment covering 28-47 (AAFQGPSDHAAYPIPQAGYQ) has biased composition (low complexity). Pro residues predominate over residues 49-64 (PPGPYPGPQPGYPVPP). The short motif at 56 to 64 (PQPGYPVPP) is the SH3-binding 2 element. Position 83 is a phosphotyrosine; by ABL (Tyr-83). The short motif at 93 to 101 (PWMPAPPPP) is the SH3-binding 3 element. Residue Thr-170 is modified to Phosphothreonine; by PKC/PRKCD. 4 S-palmitoyl cysteine lipidation sites follow: Cys-193, Cys-194, Cys-197, and Cys-198. Positions 269 to 275 (SKQWSGF) match the Nuclear localization signal motif. A helical membrane pass occupies residues 298–314 (MKAVMLGACFLIDFMFF). The Extracellular portion of the chain corresponds to 315 to 328 (ERTGNEEQRSGAWQ).

This sequence belongs to the phospholipid scramblase family. In terms of assembly, forms homooligomers in the presence of calcium. Interacts with ABL. Interacts with RELT, RELL1 and RELL2. Interacts with OXSR1 in the presence of RELT. Interacts with OCLN, TOP2A and TOP2B. Interacts with TRPC1, TRPC4 and TRPC5. Interacts with ILDR1. Requires Ca(2+) as cofactor. Mg(2+) is required as a cofactor. The cofactor is Zn(2+). Phosphorylation at Thr-170 by PKC/PKCD increases its phospholipid scramblase activity during both cell stimulation and apoptosis. Phosphorylated by OXSR1 in the presence of RELT. In terms of processing, palmitoylation is required for its phospholipid scramblase activity. Palmitoylation regulates its localization to the cell membrane or the nucleus; trafficking to the cell membrane is dependent upon palmitoylation whereas in the absence of palmitoylation, localizes to the nucleus. In terms of tissue distribution, highly expressed in kidney, lung, liver and bone marrow, slightly in spleen, heart and macrophage.

It is found in the cell membrane. The protein localises to the nucleus. Its subcellular location is the cytoplasm. The protein resides in the perinuclear region. It carries out the reaction a 1,2-diacyl-sn-glycero-3-phosphocholine(in) = a 1,2-diacyl-sn-glycero-3-phosphocholine(out). The catalysed reaction is a 1,2-diacyl-sn-glycero-3-phosphoethanolamine(in) = a 1,2-diacyl-sn-glycero-3-phosphoethanolamine(out). The enzyme catalyses a 1,2-diacyl-sn-glycero-3-phospho-L-serine(in) = a 1,2-diacyl-sn-glycero-3-phospho-L-serine(out). Functionally, catalyzes calcium-induced ATP-independent rapid bidirectional and non-specific distribution of phospholipids (lipid scrambling or lipid flip-flop) between the inner and outer leaflet of the plasma membrane resulting in collapse of the phospholipid asymmetry which leads to phosphatidylserine externalization on the cell surface. Mediates calcium-dependent phosphatidylserine externalization and apoptosis in neurons via its association with TRPC5. Also exhibits magnesium-dependent nuclease activity against double-stranded DNA and RNA but not single-stranded DNA and can enhance DNA decatenation mediated by TOP2A. Negatively regulates FcR-mediated phagocytosis in differentiated macrophages. May contribute to cytokine-regulated cell proliferation and differentiation. The chain is Phospholipid scramblase 1 (Plscr1) from Mus musculus (Mouse).